The primary structure comprises 87 residues: Small ribosomal subunit protein uS12m (87 aa).

The protein belongs to the universal ribosomal protein uS12 family.

It localises to the mitochondrion matrix. The protein localises to the kinetoplast. Its function is as follows. Protein S12 is involved in the translation initiation step. This Trypanoplasma borreli protein is Small ribosomal subunit protein uS12m (RPS12).